Consider the following 308-residue polypeptide: Aspartate carbamoyltransferase catalytic subunit (308 aa).

Carbamoyl phosphate contacts are provided by Arg-58 and Thr-59. L-aspartate is bound at residue Lys-86. Carbamoyl phosphate is bound by residues Arg-108, His-136, and Gln-139. Residues Arg-169 and Arg-222 each coordinate L-aspartate. 2 residues coordinate carbamoyl phosphate: Gly-264 and Pro-265.

Belongs to the aspartate/ornithine carbamoyltransferase superfamily. ATCase family. In terms of assembly, heterododecamer (2C3:3R2) of six catalytic PyrB chains organized as two trimers (C3), and six regulatory PyrI chains organized as three dimers (R2).

It carries out the reaction carbamoyl phosphate + L-aspartate = N-carbamoyl-L-aspartate + phosphate + H(+). It participates in pyrimidine metabolism; UMP biosynthesis via de novo pathway; (S)-dihydroorotate from bicarbonate: step 2/3. Functionally, catalyzes the condensation of carbamoyl phosphate and aspartate to form carbamoyl aspartate and inorganic phosphate, the committed step in the de novo pyrimidine nucleotide biosynthesis pathway. The chain is Aspartate carbamoyltransferase catalytic subunit from Campylobacter hominis (strain ATCC BAA-381 / DSM 21671 / CCUG 45161 / LMG 19568 / NCTC 13146 / CH001A).